A 103-amino-acid polypeptide reads, in one-letter code: Small ribosomal subunit protein bS18 (103 aa).

Residues 1–19 (MSEERTERPERTERPERPQ) show a composition bias toward basic and acidic residues. The segment at 1 to 33 (MSEERTERPERTERPERPQQRGSGPRKRRPFQR) is disordered. A compositionally biased stretch (basic residues) spans 24–33 (GPRKRRPFQR).

It belongs to the bacterial ribosomal protein bS18 family. As to quaternary structure, part of the 30S ribosomal subunit. Forms a tight heterodimer with protein bS6.

Functionally, binds as a heterodimer with protein bS6 to the central domain of the 16S rRNA, where it helps stabilize the platform of the 30S subunit. This chain is Small ribosomal subunit protein bS18, found in Geobacter sulfurreducens (strain ATCC 51573 / DSM 12127 / PCA).